Reading from the N-terminus, the 412-residue chain is DNA utilization protein HofQ (412 aa).

A signal peptide spans 1 to 18 (MKQWIAALLLMLIPGVQA).

The protein belongs to the bacterial secretin family. PilQ subfamily.

It localises to the cell outer membrane. In terms of biological role, required for the use of extracellular DNA as a nutrient. Could be the porin responsible for transport of DNA across the outer membrane. This Escherichia coli (strain K12) protein is DNA utilization protein HofQ (hofQ).